A 71-amino-acid chain; its full sequence is MNQGKVWRVVKPTVGVPVYLGAVAVTALILHGGLLAKTDWFGAYWNGGKKAAAAAAAVAPAPVAAPQAPAQ.

Residues Met-1–Gly-15 lie on the Cytoplasmic side of the membrane. Residues Val-16 to Ala-36 traverse the membrane as a helical segment. His-31 lines the a bacteriochlorophyll pocket. The Periplasmic segment spans residues Lys-37 to Lys-50. The chain crosses the membrane as a helical span at residues Ala-51 to Gln-71.

Belongs to the antenna complex alpha subunit family. An alpha/beta heterodimer conjugated to 3 bacteriochlorophyll molecules. The core complex is formed by different alpha and beta chains, binding bacteriochlorophyll molecules, and arranged most probably in tetrameric structures disposed around the reaction center. The non-pigmented gamma chains may constitute additional components.

It localises to the cell membrane. In terms of biological role, antenna complexes are light-harvesting systems, which transfer the excitation energy to the reaction centers. The protein is Light-harvesting protein B-800/850 alpha chain (pucA) of Rubrivivax gelatinosus (Rhodocyclus gelatinosus).